The chain runs to 138 residues: Peptide methionine sulfoxide reductase MsrB (138 aa).

In terms of domain architecture, MsrB spans Glu-15–Arg-137. 4 residues coordinate Zn(2+): Cys-54, Cys-57, Cys-103, and Cys-106. Catalysis depends on Cys-126, which acts as the Nucleophile.

This sequence belongs to the MsrB Met sulfoxide reductase family. Zn(2+) is required as a cofactor.

It catalyses the reaction L-methionyl-[protein] + [thioredoxin]-disulfide + H2O = L-methionyl-(R)-S-oxide-[protein] + [thioredoxin]-dithiol. This Methylibium petroleiphilum (strain ATCC BAA-1232 / LMG 22953 / PM1) protein is Peptide methionine sulfoxide reductase MsrB.